The following is a 142-amino-acid chain: Hemoglobin subunit theta-1 (142 aa).

In terms of domain architecture, Globin spans 2–142 (ALAAADRATV…VISALASDCR (141 aa)). Heme b-binding residues include H59 and H88.

The protein belongs to the globin family.

The chain is Hemoglobin subunit theta-1 (HBQ1) from Equus caballus (Horse).